Reading from the N-terminus, the 282-residue chain is Probable metal transport system membrane protein TM_0125 (282 aa).

Transmembrane regions (helical) follow at residues 33–53, 58–78, 79–99, 109–129, 148–168, 184–204, 210–230, 234–254, and 259–279; these read AFVG…IVVF, FIGD…TLIG, ADHR…VSLF, AIGI…SVSG, STDV…TVVF, FYGI…AITV, VVGV…SKIF, FWSL…AGFL, and LDLP…LPML.

Belongs to the ABC-3 integral membrane protein family.

The protein localises to the cell inner membrane. In terms of biological role, part of an ATP-driven transport system TM_0123/TM_0124/TM_0125 for a metal. This Thermotoga maritima (strain ATCC 43589 / DSM 3109 / JCM 10099 / NBRC 100826 / MSB8) protein is Probable metal transport system membrane protein TM_0125.